Consider the following 386-residue polypeptide: Cytochrome b (386 aa).

Transmembrane regions (helical) follow at residues 32–52 (TGSL…FTAM), 76–98 (YLIR…GHIG), 113–133 (VWVI…TGYC), and 179–199 (FFAL…MHLM). Heme b-binding residues include histidine 82 and histidine 96. 2 residues coordinate heme b: histidine 183 and histidine 197. An a ubiquinone-binding site is contributed by histidine 202. 4 helical membrane-spanning segments follow: residues 225–245 (FVFK…TFVF), 289–309 (LGGV…PVTD), 321–341 (FSKT…QLGQ), and 348–368 (FIEM…VLVP).

Belongs to the cytochrome b family. Fungal cytochrome b-c1 complex contains 10 subunits; 3 respiratory subunits, 2 core proteins and 5 low-molecular weight proteins. Cytochrome b-c1 complex is a homodimer. Heme b is required as a cofactor.

Its subcellular location is the mitochondrion inner membrane. Its function is as follows. Component of the ubiquinol-cytochrome c reductase complex (complex III or cytochrome b-c1 complex) that is part of the mitochondrial respiratory chain. The b-c1 complex mediates electron transfer from ubiquinol to cytochrome c. Contributes to the generation of a proton gradient across the mitochondrial membrane that is then used for ATP synthesis. This chain is Cytochrome b (COB), found in Wickerhamomyces pijperi (Yeast).